Reading from the N-terminus, the 341-residue chain is Phosphoribosylformylglycinamidine cyclo-ligase (341 aa).

This sequence belongs to the AIR synthase family.

It is found in the cytoplasm. The catalysed reaction is 2-formamido-N(1)-(5-O-phospho-beta-D-ribosyl)acetamidine + ATP = 5-amino-1-(5-phospho-beta-D-ribosyl)imidazole + ADP + phosphate + H(+). It participates in purine metabolism; IMP biosynthesis via de novo pathway; 5-amino-1-(5-phospho-D-ribosyl)imidazole from N(2)-formyl-N(1)-(5-phospho-D-ribosyl)glycinamide: step 2/2. This is Phosphoribosylformylglycinamidine cyclo-ligase from Xanthomonas oryzae pv. oryzae (strain MAFF 311018).